We begin with the raw amino-acid sequence, 146 residues long: uncharacterized protein (146 aa).

A helical transmembrane segment spans residues 7 to 27 (FVLSITIVLVILIIIAFIWYN).

The protein belongs to the asfivirus E146L family.

The protein resides in the host membrane. It localises to the virion. This is an uncharacterized protein from African swine fever virus (strain Badajoz 1971 Vero-adapted) (Ba71V).